We begin with the raw amino-acid sequence, 350 residues long: Small ribosomal subunit biogenesis GTPase RsgA (350 aa).

Polar residues predominate over residues 1 to 17 (MSKNKLSKGQQRRVNAN). Residues 1–27 (MSKNKLSKGQQRRVNANHQRRLKTSAE) are disordered. The CP-type G domain occupies 104 to 273 (TSVLTRPDFY…VIDSPGVREF (170 aa)). GTP contacts are provided by residues 160 to 163 (NKID) and 214 to 222 (GQSGVGKSS). Cysteine 297, cysteine 302, histidine 304, and cysteine 310 together coordinate Zn(2+).

It belongs to the TRAFAC class YlqF/YawG GTPase family. RsgA subfamily. As to quaternary structure, monomer. Associates with 30S ribosomal subunit, binds 16S rRNA. Zn(2+) is required as a cofactor.

It localises to the cytoplasm. Its function is as follows. One of several proteins that assist in the late maturation steps of the functional core of the 30S ribosomal subunit. Helps release RbfA from mature subunits. May play a role in the assembly of ribosomal proteins into the subunit. Circularly permuted GTPase that catalyzes slow GTP hydrolysis, GTPase activity is stimulated by the 30S ribosomal subunit. This is Small ribosomal subunit biogenesis GTPase RsgA from Salmonella agona (strain SL483).